The following is a 140-amino-acid chain: Non-specific lipid transfer protein GPI-anchored 33 (140 aa).

The first 27 residues, 1-27 (MAYTNKVTISAAVATMMLFLAVTIVDA), serve as a signal peptide directing secretion. 4 disulfide bridges follow: Cys40/Cys80, Cys52/Cys64, Cys65/Cys104, and Cys78/Cys112. An N-linked (GlcNAc...) asparagine glycan is attached at Asn91. Gly115 is lipidated: GPI-anchor amidated glycine. Residues 116–140 (DASGGSTNKIAASMVLLGLVASLFF) constitute a propeptide, removed in mature form.

This sequence belongs to the plant LTP family.

Its subcellular location is the cell membrane. Probable lipid transfer protein. The sequence is that of Non-specific lipid transfer protein GPI-anchored 33 from Arabidopsis thaliana (Mouse-ear cress).